Reading from the N-terminus, the 603-residue chain is Mono(2-hydroxyethyl) terephthalate hydrolase (603 aa).

Positions Met1–Ala17 are cleaved as a signal peptide. Cys18 is lipidated: N-palmitoyl cysteine. The S-diacylglycerol cysteine moiety is linked to residue Cys18. The segment at Thr24 to Pro44 is disordered. Residues Leu26–Pro44 are compositionally biased toward pro residues. Cys51 and Cys92 are oxidised to a cystine. Gly132 is a 4-[(2-hydroxyethoxy)carbonyl]benzoate binding site. Disulfide bonds link Cys224–Cys529, Cys303–Cys320, Cys340–Cys348, and Cys577–Cys599. The active-site Acyl-ester intermediate is the Ser225. Position 226 (Glu226) interacts with 4-[(2-hydroxyethoxy)carbonyl]benzoate. The Ca(2+) site is built by Asp304, Asp307, Leu309, Asp311, and Ile313. 4-[(2-hydroxyethoxy)carbonyl]benzoate is bound by residues Arg411 and Ser416. Catalysis depends on charge relay system residues Asp492 and His528. A 4-[(2-hydroxyethoxy)carbonyl]benzoate-binding site is contributed by His528.

Belongs to the tannase family.

The protein resides in the cell outer membrane. It catalyses the reaction 4-[(2-hydroxyethoxy)carbonyl]benzoate + H2O = terephthalate + ethylene glycol + H(+). In terms of biological role, involved in the degradation and assimilation of the plastic poly(ethylene terephthalate) (PET), which allows I.sakaiensis to use PET as its major energy and carbon source for growth. Likely acts synergistically with PETase to depolymerize PET. Catalyzes the hydrolysis of mono(2-hydroxyethyl) terephthalate (MHET) into its two environmentally benign monomers, terephthalate and ethylene glycol. Does not show activity against PET, bis(hydroxyethyl) terephthalate (BHET), pNP-aliphatic esters or typical aromatic ester compounds catalyzed by the tannase family enzymes, such as ethyl gallate and ethyl ferulate. The sequence is that of Mono(2-hydroxyethyl) terephthalate hydrolase from Piscinibacter sakaiensis (Ideonella sakaiensis).